The primary structure comprises 62 residues: Large ribosomal subunit protein bL28 (62 aa).

The protein belongs to the bacterial ribosomal protein bL28 family.

This is Large ribosomal subunit protein bL28 from Acetivibrio thermocellus (strain ATCC 27405 / DSM 1237 / JCM 9322 / NBRC 103400 / NCIMB 10682 / NRRL B-4536 / VPI 7372) (Clostridium thermocellum).